A 177-amino-acid polypeptide reads, in one-letter code: Large ribosomal subunit protein uL10 (177 aa).

The protein belongs to the universal ribosomal protein uL10 family. Part of the ribosomal stalk of the 50S ribosomal subunit. The N-terminus interacts with L11 and the large rRNA to form the base of the stalk. The C-terminus forms an elongated spine to which L12 dimers bind in a sequential fashion forming a multimeric L10(L12)X complex.

Its function is as follows. Forms part of the ribosomal stalk, playing a central role in the interaction of the ribosome with GTP-bound translation factors. This Xanthomonas axonopodis pv. citri (strain 306) protein is Large ribosomal subunit protein uL10.